Reading from the N-terminus, the 656-residue chain is ATP-dependent RNA helicase MRH4, mitochondrial (656 aa).

The N-terminal 46 residues, 1–46 (MTSFSHLSRLRMSAFLPHVCLQCRLKTVSSLPAQSSASSLLQAVRH), are a transit peptide targeting the mitochondrion. Residues 42 to 125 (QAVRHASSAR…KDKDGSEKKQ (84 aa)) are disordered. Residues 60 to 71 (MTLSPNVAQSTV) show a composition bias toward polar residues. The span at 96–125 (NLRDRQRPRSQAELKRTSFKKDKDGSEKKQ) shows a compositional bias: basic and acidic residues. Residues 157 to 190 (TSFDQFDLLPSVRQSVYDSALPGLEYVTPTPIQR) carry the Q motif motif. Residues 210 to 431 (QEDMPRFDQY…RERFPQIRRL (222 aa)) enclose the Helicase ATP-binding domain. Residue 223-230 (AETGSGKT) participates in ATP binding. Residues 246 to 270 (AKDKEEEERMAKEELEKEQEQAKEK) form a disordered region. A DEAD box motif is present at residues 378 to 381 (DEAD). Residues 480–656 (DVGYQVTGQK…EAMYRGQALI (177 aa)) form the Helicase C-terminal domain.

It belongs to the DEAD box helicase family. MRH4 subfamily.

The protein localises to the mitochondrion. It catalyses the reaction ATP + H2O = ADP + phosphate + H(+). ATP-binding RNA helicase involved in mitochondrial RNA metabolism. Required for maintenance of mitochondrial DNA. This Coccidioides immitis (strain RS) (Valley fever fungus) protein is ATP-dependent RNA helicase MRH4, mitochondrial (MRH4).